We begin with the raw amino-acid sequence, 539 residues long: Cytochrome c oxidase subunit 1 homolog, bacteroid (539 aa).

3 helical membrane-spanning segments follow: residues 4–24, 28–48, and 75–95; these read TVEMVVLSVGAFLALVGAGLA, LFGAHMWVLFFALLAGTLVLM, and GVVATVFWGVVGFLVGVVVAL. H117 lines the heme b pocket. Transmembrane regions (helical) follow at residues 118–138, 154–174, 187–207, 214–234, 265–285, 298–318, 330–350, and 368–388; these read TSAVIFAFGGNALIATSFYVV, FVFWGYQLFIVLAASGYLLGI, VDLWLTIVWVAYLVAFLGTIM, IYVANWFYLAFIVTIAMLHVV, GHNAVGFFLTAGFLAMMYYFI, LSIIHFWAIIFMYIWAGPHHL, LGMVFSIMLWMPSWGGMINGL, and MMVMAVAFYGMATFEGPMMSI. The Cu cation site is built by H266, H316, and H317. The heme b site is built by H404 and H406. 4 helical membrane-spanning segments follow: residues 405–425, 443–463, 475–495, and 499–519; these read VHSGALGWNGLITFGAIYYLV, HFWLATLGIVVYAAVMWVAGI, QGFLVYSFAETVAAMFPYYVM, and GGALFLAGALLMAFNVTMTIL.

The protein belongs to the heme-copper respiratory oxidase family. Cu(2+) serves as cofactor. The cofactor is heme b.

It localises to the cell membrane. It carries out the reaction 4 Fe(II)-[cytochrome c] + O2 + 8 H(+)(in) = 4 Fe(III)-[cytochrome c] + 2 H2O + 4 H(+)(out). Its pathway is energy metabolism; oxidative phosphorylation. Its function is as follows. Cytochrome c oxidase is the component of the respiratory chain that catalyzes the reduction of oxygen to water. Subunits 1-3 form the functional core of the enzyme complex. Co I is the catalytic subunit of the enzyme. Electrons originating in cytochrome c or a quinol are transferred to the bimetallic center formed by a high-spin heme and copper B. The polypeptide is Cytochrome c oxidase subunit 1 homolog, bacteroid (fixN) (Rhizobium meliloti (strain 1021) (Ensifer meliloti)).